We begin with the raw amino-acid sequence, 114 residues long: Large ribosomal subunit protein uL18 (114 aa).

It belongs to the universal ribosomal protein uL18 family. In terms of assembly, part of the 50S ribosomal subunit; part of the 5S rRNA/L5/L18/L25 subcomplex. Contacts the 5S and 23S rRNAs.

Its function is as follows. This is one of the proteins that bind and probably mediate the attachment of the 5S RNA into the large ribosomal subunit, where it forms part of the central protuberance. This chain is Large ribosomal subunit protein uL18, found in Bacteroides thetaiotaomicron (strain ATCC 29148 / DSM 2079 / JCM 5827 / CCUG 10774 / NCTC 10582 / VPI-5482 / E50).